Here is a 173-residue protein sequence, read N- to C-terminus: Translation initiation factor IF-3 (173 aa).

Belongs to the IF-3 family. Monomer.

The protein resides in the cytoplasm. Functionally, IF-3 binds to the 30S ribosomal subunit and shifts the equilibrium between 70S ribosomes and their 50S and 30S subunits in favor of the free subunits, thus enhancing the availability of 30S subunits on which protein synthesis initiation begins. The protein is Translation initiation factor IF-3 of Aromatoleum aromaticum (strain DSM 19018 / LMG 30748 / EbN1) (Azoarcus sp. (strain EbN1)).